Here is a 316-residue protein sequence, read N- to C-terminus: protein SLOW GREEN 1, chloroplastic (316 aa).

A chloroplast-targeting transit peptide spans 1–39 (MISSLSASSSLVSSFVAVKATPVTGPLIPRRDLLSIRIR). TPR repeat units lie at residues 118-151 (VETLRSLLQQKLEKGEDEEALKLLERLVAAQPEE), 152-185 (TEWKFLMARLLGEMGRPENARQMFEEILQRNPLS), 226-259 (RDVRLIIAQIHFLQKNVDEALKSYEQLTKEDPKD), and 261-293 (RPYFCRGMIYSLLDKNVEAKEQFAKYRELSPKK).

In terms of tissue distribution, ubiquitous. Preferentially expressed in newly formed green tissues.

Its subcellular location is the plastid. It is found in the chloroplast. In terms of biological role, required for the early stage of chloroplast development. May be involved in chloroplast protein biosynthesis and/or degradation. The polypeptide is protein SLOW GREEN 1, chloroplastic (Arabidopsis thaliana (Mouse-ear cress)).